Reading from the N-terminus, the 76-residue chain is Beta-defensin 121 (76 aa).

The signal sequence occupies residues 1-15 (MKLLLLLLTVTLLLA). 3 disulfides stabilise this stretch: Cys-23–Cys-50, Cys-30–Cys-44, and Cys-34–Cys-51.

The protein belongs to the beta-defensin family. In terms of tissue distribution, abundant expression in the male reproductive tract only.

The protein localises to the secreted. Has antibacterial activity. This is Beta-defensin 121 (DEFB121) from Macaca mulatta (Rhesus macaque).